The following is a 159-amino-acid chain: Peptide deformylase (159 aa).

Residues C88 and H130 each coordinate Fe cation. The active site involves E131. H134 is a Fe cation binding site.

This sequence belongs to the polypeptide deformylase family. It depends on Fe(2+) as a cofactor.

It catalyses the reaction N-terminal N-formyl-L-methionyl-[peptide] + H2O = N-terminal L-methionyl-[peptide] + formate. Removes the formyl group from the N-terminal Met of newly synthesized proteins. Requires at least a dipeptide for an efficient rate of reaction. N-terminal L-methionine is a prerequisite for activity but the enzyme has broad specificity at other positions. The sequence is that of Peptide deformylase from Thermoanaerobacter pseudethanolicus (strain ATCC 33223 / 39E) (Clostridium thermohydrosulfuricum).